The primary structure comprises 116 residues: Small ribosomal subunit protein bS16 (116 aa).

The interval 88-116 is disordered; it reads RNNPKAAVPGKRMAELAKKKAERAAASAE. Residues 99–110 are compositionally biased toward basic and acidic residues; sequence RMAELAKKKAER.

This sequence belongs to the bacterial ribosomal protein bS16 family.

The chain is Small ribosomal subunit protein bS16 from Cereibacter sphaeroides (strain ATCC 17025 / ATH 2.4.3) (Rhodobacter sphaeroides).